Reading from the N-terminus, the 41-residue chain is Large ribosomal subunit protein bL36 (41 aa).

The protein belongs to the bacterial ribosomal protein bL36 family.

The protein is Large ribosomal subunit protein bL36 of Hyphomonas neptunium (strain ATCC 15444).